The following is a 360-amino-acid chain: Photosystem II protein D1 (360 aa).

The next 3 membrane-spanning stretches (helical) occupy residues 29–46 (YIGW…TATT), 118–133 (HFLL…EWEL), and 142–156 (WIAV…AATA). Residue His-118 coordinates chlorophyll a. Tyr-126 lines the pheophytin a pocket. Positions 170 and 189 each coordinate [CaMn4O5] cluster. The helical transmembrane segment at 197–218 (FHMMGVAGVFGGSLFSAMHGSL) threads the bilayer. Position 198 (His-198) interacts with chlorophyll a. A quinone-binding positions include His-215 and 264-265 (SF). His-215 provides a ligand contact to Fe cation. Fe cation is bound at residue His-272. The chain crosses the membrane as a helical span at residues 274–288 (FLALWPVVGIWFTAL). 4 residues coordinate [CaMn4O5] cluster: His-332, Glu-333, Asp-342, and Ala-344. Residues 345–360 (SGEVMPVALTAPSINA) constitute a propeptide that is removed on maturation.

This sequence belongs to the reaction center PufL/M/PsbA/D family. As to quaternary structure, PSII is composed of 1 copy each of membrane proteins PsbA, PsbB, PsbC, PsbD, PsbE, PsbF, PsbH, PsbI, PsbJ, PsbK, PsbL, PsbM, PsbT, PsbX, PsbY, PsbZ, Psb30/Ycf12, at least 3 peripheral proteins of the oxygen-evolving complex and a large number of cofactors. It forms dimeric complexes. The cofactor is The D1/D2 heterodimer binds P680, chlorophylls that are the primary electron donor of PSII, and subsequent electron acceptors. It shares a non-heme iron and each subunit binds pheophytin, quinone, additional chlorophylls, carotenoids and lipids. D1 provides most of the ligands for the Mn4-Ca-O5 cluster of the oxygen-evolving complex (OEC). There is also a Cl(-1) ion associated with D1 and D2, which is required for oxygen evolution. The PSII complex binds additional chlorophylls, carotenoids and specific lipids.. Post-translationally, tyr-161 forms a radical intermediate that is referred to as redox-active TyrZ, YZ or Y-Z. In terms of processing, C-terminally processed by CTPA; processing is essential to allow assembly of the oxygen-evolving complex and thus photosynthetic growth.

The protein localises to the plastid. The protein resides in the cyanelle thylakoid membrane. The catalysed reaction is 2 a plastoquinone + 4 hnu + 2 H2O = 2 a plastoquinol + O2. In terms of biological role, photosystem II (PSII) is a light-driven water:plastoquinone oxidoreductase that uses light energy to abstract electrons from H(2)O, generating O(2) and a proton gradient subsequently used for ATP formation. It consists of a core antenna complex that captures photons, and an electron transfer chain that converts photonic excitation into a charge separation. The D1/D2 (PsbA/PsbD) reaction center heterodimer binds P680, the primary electron donor of PSII as well as several subsequent electron acceptors. This Cyanophora paradoxa protein is Photosystem II protein D1.